Reading from the N-terminus, the 234-residue chain is MRIEKLLNAALLAGAVSAHTIMTSLVVDGTEYPPGHAVRIPSYNGPITDVTSNSVACNGPPNPTTPSSEIIMVRAGSTIQGKWRHTETDVIDPSHKGPVMAYLKKVDDAINDPGTGDGWFKIWEDGLHDDGTWAVDDLIAANGYQDIPIPPCLADGQYLLRAEIIALHGASQPGGAQLYMECAQIGVVGGSGTANPSTVAFPGAYKADDPGITVNIYWPPLEEYIIPGPDPFTC.

A signal peptide spans 1–18 (MRIEKLLNAALLAGAVSA). The Cu(2+) site is built by His19 and His95. Cys57 and Cys182 form a disulfide bridge. Residues His168 and Gln177 each coordinate O2. Position 179 (Tyr179) interacts with Cu(2+).

The protein belongs to the polysaccharide monooxygenase AA9 family. Cu(2+) is required as a cofactor.

The protein localises to the secreted. It carries out the reaction [(1-&gt;4)-beta-D-glucosyl]n+m + reduced acceptor + O2 = 4-dehydro-beta-D-glucosyl-[(1-&gt;4)-beta-D-glucosyl]n-1 + [(1-&gt;4)-beta-D-glucosyl]m + acceptor + H2O.. In terms of biological role, lytic polysaccharide monooxygenase (LPMO) that depolymerizes crystalline and amorphous polysaccharides via the oxidation of scissile alpha- or beta-(1-4)-glycosidic bonds, yielding C1 or C4 oxidation products. Catalysis by LPMOs requires the reduction of the active-site copper from Cu(II) to Cu(I) by a reducing agent and H(2)O(2) or O(2) as a cosubstrate. The chain is AA9 family lytic polysaccharide monooxygenase D from Malbranchea cinnamomea (Thermophilic fungus).